We begin with the raw amino-acid sequence, 740 residues long: Phosphoribosylformylglycinamidine synthase subunit PurL (740 aa).

The active site involves histidine 55. ATP contacts are provided by tyrosine 58 and lysine 97. A Mg(2+)-binding site is contributed by glutamate 99. Substrate-binding positions include 100–103 (SHNH) and arginine 122. Residue histidine 101 is the Proton acceptor of the active site. Aspartate 123 contacts Mg(2+). Residue glutamine 246 participates in substrate binding. A Mg(2+)-binding site is contributed by aspartate 276. Residue 320-322 (ESQ) participates in substrate binding. Residues aspartate 501 and glycine 538 each contribute to the ATP site. Asparagine 539 is a binding site for Mg(2+). Serine 541 contacts substrate.

Belongs to the FGAMS family. Monomer. Part of the FGAM synthase complex composed of 1 PurL, 1 PurQ and 2 PurS subunits.

It localises to the cytoplasm. The enzyme catalyses N(2)-formyl-N(1)-(5-phospho-beta-D-ribosyl)glycinamide + L-glutamine + ATP + H2O = 2-formamido-N(1)-(5-O-phospho-beta-D-ribosyl)acetamidine + L-glutamate + ADP + phosphate + H(+). It functions in the pathway purine metabolism; IMP biosynthesis via de novo pathway; 5-amino-1-(5-phospho-D-ribosyl)imidazole from N(2)-formyl-N(1)-(5-phospho-D-ribosyl)glycinamide: step 1/2. In terms of biological role, part of the phosphoribosylformylglycinamidine synthase complex involved in the purines biosynthetic pathway. Catalyzes the ATP-dependent conversion of formylglycinamide ribonucleotide (FGAR) and glutamine to yield formylglycinamidine ribonucleotide (FGAM) and glutamate. The FGAM synthase complex is composed of three subunits. PurQ produces an ammonia molecule by converting glutamine to glutamate. PurL transfers the ammonia molecule to FGAR to form FGAM in an ATP-dependent manner. PurS interacts with PurQ and PurL and is thought to assist in the transfer of the ammonia molecule from PurQ to PurL. The chain is Phosphoribosylformylglycinamidine synthase subunit PurL from Lacticaseibacillus casei (Lactobacillus casei).